The following is an 89-amino-acid chain: Small ribosomal subunit protein uS15 (89 aa).

The protein belongs to the universal ribosomal protein uS15 family. In terms of assembly, part of the 30S ribosomal subunit. Forms a bridge to the 50S subunit in the 70S ribosome, contacting the 23S rRNA.

Functionally, one of the primary rRNA binding proteins, it binds directly to 16S rRNA where it helps nucleate assembly of the platform of the 30S subunit by binding and bridging several RNA helices of the 16S rRNA. In terms of biological role, forms an intersubunit bridge (bridge B4) with the 23S rRNA of the 50S subunit in the ribosome. This Rhizobium johnstonii (strain DSM 114642 / LMG 32736 / 3841) (Rhizobium leguminosarum bv. viciae) protein is Small ribosomal subunit protein uS15.